The primary structure comprises 576 residues: 2-succinyl-5-enolpyruvyl-6-hydroxy-3-cyclohexene-1-carboxylate synthase (576 aa).

It belongs to the TPP enzyme family. MenD subfamily. Homodimer. Mg(2+) is required as a cofactor. Requires Mn(2+) as cofactor. It depends on thiamine diphosphate as a cofactor.

The catalysed reaction is isochorismate + 2-oxoglutarate + H(+) = 5-enolpyruvoyl-6-hydroxy-2-succinyl-cyclohex-3-ene-1-carboxylate + CO2. It functions in the pathway quinol/quinone metabolism; 1,4-dihydroxy-2-naphthoate biosynthesis; 1,4-dihydroxy-2-naphthoate from chorismate: step 2/7. It participates in quinol/quinone metabolism; menaquinone biosynthesis. In terms of biological role, catalyzes the thiamine diphosphate-dependent decarboxylation of 2-oxoglutarate and the subsequent addition of the resulting succinic semialdehyde-thiamine pyrophosphate anion to isochorismate to yield 2-succinyl-5-enolpyruvyl-6-hydroxy-3-cyclohexene-1-carboxylate (SEPHCHC). This chain is 2-succinyl-5-enolpyruvyl-6-hydroxy-3-cyclohexene-1-carboxylate synthase, found in Photobacterium profundum (strain SS9).